Consider the following 402-residue polypeptide: Metacaspase-1 (402 aa).

Positions 1–79 are disordered; that stretch reads MAYPGQGGHH…FAPPSGPIGP (79 aa). The segment covering 23–45 has biased composition (low complexity); the sequence is PAPHGYAQPGYGYAPPSGPPQGY. Residues H193 and C249 contribute to the active site.

It belongs to the peptidase C14B family.

Its function is as follows. Involved in cell death (apoptosis). The sequence is that of Metacaspase-1 (MCA1) from Mycosarcoma maydis (Corn smut fungus).